The sequence spans 1641 residues: Maestro heat-like repeat-containing protein family member 1 (1641 aa).

7 HEAT repeats span residues Glu-3–Val-41, Val-159–Glu-198, Cys-344–Ala-382, Glu-385–Leu-423, Pro-1048–Gly-1086, Leu-1358–Asp-1396, and Gln-1605–Ala-1641.

It belongs to the MROH1 family. Homooligomer; homooligomerizes at lysosome scission sites.

It is found in the lysosome membrane. Lysosome fission factor. Recruited to lysosomes by RAB7 (RAB7A or RAB7B) at scission sites and homooligomerizes to mediate the constriction and scission of lysosomal tubules. May sever membranes by inserting amphipathic helices into one bilayer leaflet. Lysosome fission is required to maintain their steady-state number, shape, size, composition and function, and to accomplish regeneration. The chain is Maestro heat-like repeat-containing protein family member 1 from Homo sapiens (Human).